A 515-amino-acid chain; its full sequence is Anthranilate synthase component 1 (515 aa).

L-tryptophan is bound by residues Thr-40 and 291–293; that span reads PYM. 328 to 329 contacts chorismate; it reads GT. Glu-361 is a Mg(2+) binding site. Chorismate is bound by residues Tyr-449, Arg-469, 483-485, and Gly-485; that span reads GAG. Glu-498 is a Mg(2+) binding site.

The protein belongs to the anthranilate synthase component I family. As to quaternary structure, heterotetramer consisting of two non-identical subunits: a beta subunit (TrpG) and a large alpha subunit (TrpE). Mg(2+) serves as cofactor.

The catalysed reaction is chorismate + L-glutamine = anthranilate + pyruvate + L-glutamate + H(+). Its pathway is amino-acid biosynthesis; L-tryptophan biosynthesis; L-tryptophan from chorismate: step 1/5. Feedback inhibited by tryptophan. Functionally, part of a heterotetrameric complex that catalyzes the two-step biosynthesis of anthranilate, an intermediate in the biosynthesis of L-tryptophan. In the first step, the glutamine-binding beta subunit (TrpG) of anthranilate synthase (AS) provides the glutamine amidotransferase activity which generates ammonia as a substrate that, along with chorismate, is used in the second step, catalyzed by the large alpha subunit of AS (TrpE) to produce anthranilate. In the absence of TrpG, TrpE can synthesize anthranilate directly from chorismate and high concentrations of ammonia. This Buchnera aphidicola subsp. Schizaphis graminum (strain Sg) protein is Anthranilate synthase component 1 (trpE).